An 881-amino-acid chain; its full sequence is Alanine--tRNA ligase (881 aa).

Zn(2+)-binding residues include H568, H572, C670, and H674.

Belongs to the class-II aminoacyl-tRNA synthetase family. Requires Zn(2+) as cofactor.

It is found in the cytoplasm. The catalysed reaction is tRNA(Ala) + L-alanine + ATP = L-alanyl-tRNA(Ala) + AMP + diphosphate. In terms of biological role, catalyzes the attachment of alanine to tRNA(Ala) in a two-step reaction: alanine is first activated by ATP to form Ala-AMP and then transferred to the acceptor end of tRNA(Ala). Also edits incorrectly charged Ser-tRNA(Ala) and Gly-tRNA(Ala) via its editing domain. The protein is Alanine--tRNA ligase of Moorella thermoacetica (strain ATCC 39073 / JCM 9320).